Consider the following 253-residue polypeptide: Probable U3 small nucleolar RNA-associated protein 11 (253 aa).

A disordered region spans residues 1-26 (MAAAFRKAAKSRQREHRERSQPGFRK). Residues Lys74, Lys83, and Lys86 each participate in a glycyl lysine isopeptide (Lys-Gly) (interchain with G-Cter in SUMO2) cross-link. Thr90 carries the phosphothreonine modification. Glycyl lysine isopeptide (Lys-Gly) (interchain with G-Cter in SUMO2) cross-links involve residues Lys103, Lys120, Lys143, Lys144, Lys180, Lys211, Lys218, Lys235, and Lys236. Ser241 is subject to Phosphoserine. A Glycyl lysine isopeptide (Lys-Gly) (interchain with G-Cter in SUMO2) cross-link involves residue Lys246.

The protein belongs to the UTP11 family. Part of the small subunit (SSU) processome, composed of more than 70 proteins and the RNA chaperone small nucleolar RNA (snoRNA) U3.

The protein localises to the nucleus. It localises to the nucleolus. Its function is as follows. Part of the small subunit (SSU) processome, first precursor of the small eukaryotic ribosomal subunit. During the assembly of the SSU processome in the nucleolus, many ribosome biogenesis factors, an RNA chaperone and ribosomal proteins associate with the nascent pre-rRNA and work in concert to generate RNA folding, modifications, rearrangements and cleavage as well as targeted degradation of pre-ribosomal RNA by the RNA exosome. Involved in nucleolar processing of pre-18S ribosomal RNA. This is Probable U3 small nucleolar RNA-associated protein 11 from Homo sapiens (Human).